Here is a 154-residue protein sequence, read N- to C-terminus: Low molecular weight protein-tyrosine-phosphatase PtpA (154 aa).

Catalysis depends on C8, which acts as the Nucleophile. The active site involves R14. Residue D120 is the Proton donor of the active site.

Belongs to the low molecular weight phosphotyrosine protein phosphatase family. As to quaternary structure, interacts with host CORO1A. In terms of processing, phosphorylations at Tyr-122 and Tyr-123 are essential for phosphatase activity.

Its subcellular location is the secreted. It catalyses the reaction O-phospho-L-tyrosyl-[protein] + H2O = L-tyrosyl-[protein] + phosphate. Its function is as follows. Secreted tyrosine phosphatase that plays a critical role during infection as a bacterial effector protein that counteracts host defenses. Required for intramacrophage survival. This is Low molecular weight protein-tyrosine-phosphatase PtpA (ptpA) from Staphylococcus aureus (strain MRSA252).